A 63-amino-acid chain; its full sequence is Large ribosomal subunit protein uL30 (63 aa).

It belongs to the universal ribosomal protein uL30 family. As to quaternary structure, part of the 50S ribosomal subunit.

The polypeptide is Large ribosomal subunit protein uL30 (Xanthomonas campestris pv. campestris (strain 8004)).